A 320-amino-acid polypeptide reads, in one-letter code: Cytochrome c biogenesis protein CcsA (320 aa).

8 consecutive transmembrane segments (helical) span residues 9-29, 44-64, 71-91, 99-119, 144-164, 226-246, 261-281, and 287-307; these read ILIH…FLTL, GMIV…IYSG, LYES…VCYF, LNAI…SGLL, MVLG…LLVI, IISL…VWAN, WAFI…NINL, and AIVA…VNLL.

This sequence belongs to the CcmF/CycK/Ccl1/NrfE/CcsA family. May interact with Ccs1.

Its subcellular location is the plastid. It is found in the chloroplast thylakoid membrane. Functionally, required during biogenesis of c-type cytochromes (cytochrome c6 and cytochrome f) at the step of heme attachment. The polypeptide is Cytochrome c biogenesis protein CcsA (Carica papaya (Papaya)).